Here is a 370-residue protein sequence, read N- to C-terminus: Probable pectin lyase E (370 aa).

Cysteine 75 and cysteine 96 form a disulfide bridge. Residue arginine 245 is part of the active site. An N-linked (GlcNAc...) asparagine glycan is attached at asparagine 307. Cysteine 311 and cysteine 319 are joined by a disulfide.

This sequence belongs to the polysaccharide lyase 1 family.

Its subcellular location is the secreted. The enzyme catalyses Eliminative cleavage of (1-&gt;4)-alpha-D-galacturonan methyl ester to give oligosaccharides with 4-deoxy-6-O-methyl-alpha-D-galact-4-enuronosyl groups at their non-reducing ends.. Its function is as follows. Pectinolytic enzymes consist of four classes of enzymes: pectin lyase, polygalacturonase, pectin methylesterase and rhamnogalacturonase. Among pectinolytic enzymes, pectin lyase is the most important in depolymerization of pectin, since it cleaves internal glycosidic bonds of highly methylated pectins. The polypeptide is Probable pectin lyase E (pelE) (Aspergillus niger).